Consider the following 296-residue polypeptide: Nucleotide-binding protein SEQ_0857 (296 aa).

13–20 (GMSGAGKT) serves as a coordination point for ATP. 63–66 (DMRS) contacts GTP.

It belongs to the RapZ-like family.

Displays ATPase and GTPase activities. The sequence is that of Nucleotide-binding protein SEQ_0857 from Streptococcus equi subsp. equi (strain 4047).